Here is a 116-residue protein sequence, read N- to C-terminus: MSNIIKQIEQEQLKQNVPSFRPGDTLEVKVWVVEGSKRRLQAFEGVVIAIRNRGLHSAFTLRKVSNGVGVERVFQTHSPVVDSISVKRKGAVRKAKLYYLRERSGKSARIKERLGE.

The protein belongs to the bacterial ribosomal protein bL19 family.

Functionally, this protein is located at the 30S-50S ribosomal subunit interface and may play a role in the structure and function of the aminoacyl-tRNA binding site. This Actinobacillus pleuropneumoniae serotype 5b (strain L20) protein is Large ribosomal subunit protein bL19.